Reading from the N-terminus, the 58-residue chain is Putative transcript Y 13 protein (58 aa).

Residues 17–37 form a helical membrane-spanning segment; sequence LLGWDLNLSLFLGLCLMLLLA.

The protein localises to the membrane. The sequence is that of Putative transcript Y 13 protein (TTTY13) from Homo sapiens (Human).